A 113-amino-acid polypeptide reads, in one-letter code: Tachykinin-4 (113 aa).

Positions 1-20 (MLPCLALLLLMELSVCTVAG) are cleaved as a signal peptide. Position 67 is a methionine amide (Met-67). Positions 71–79 (VGGRPLIQP) are excised as a propeptide. Leu-95 carries the leucine amide modification. A propeptide spanning residues 98-113 (RSLFTEGREDEAQGSE) is cleaved from the precursor.

The protein belongs to the tachykinin family. In terms of tissue distribution, expressed at low levels in the uterus of both pregnant and non-pregnant women. Isoform 1 is found only in the adrenal gland and fetal liver. Isoform 2 is found in heart, liver, bone marrow, prostate, adrenal gland and testis. Isoform 3 and isoform 4 are expressed predominantly in adrenal gland and placenta.

The protein resides in the secreted. Tachykinins are active peptides which excite neurons, evoke behavioral responses, are potent vasodilators and secretagogues, and contract (directly or indirectly) many smooth muscles. Endokinin-A induces thermal hyperalgesia and pain-related behavior such as scratching following intrathecal administration in rats. These effects are suppressed by treatment with endokinin-C. Endokinin-A/B reduces arterial blood pressure and increases sperm motility. The polypeptide is Tachykinin-4 (Homo sapiens (Human)).